Here is a 99-residue protein sequence, read N- to C-terminus: Ubiquitin-related modifier 1 homolog (99 aa).

G99 carries the 1-thioglycine modification. G99 is covalently cross-linked (Glycyl lysine isopeptide (Gly-Lys) (interchain with K-? in acceptor proteins)).

The protein belongs to the URM1 family. As to quaternary structure, interacts with cer. In terms of processing, C-terminal thiocarboxylation occurs in 2 steps, it is first acyl-adenylated (-COAMP) via the hesA/moeB/thiF part of the MOCS3 homolog, then thiocarboxylated (-COSH) via the rhodanese domain of the MOCS3 homolog.

Its subcellular location is the cytoplasm. Its pathway is tRNA modification; 5-methoxycarbonylmethyl-2-thiouridine-tRNA biosynthesis. In terms of biological role, acts as a sulfur carrier required for 2-thiolation of mcm(5)S(2)U at tRNA wobble positions of cytosolic tRNA(Lys), tRNA(Glu) and tRNA(Gln). Serves as sulfur donor in tRNA 2-thiolation reaction by being thiocarboxylated (-COSH) at its C-terminus by MOCS3. The sulfur is then transferred to tRNA to form 2-thiolation of mcm(5)S(2)U. Also acts as a ubiquitin-like protein (UBL) that is covalently conjugated via an isopeptide bond to lysine residues of target proteins such as Prx2/Jafrac1, Ciao1, Eip71CD and GILT1. The thiocarboxylated form serves as substrate for conjugation and oxidative stress specifically induces the formation of UBL-protein conjugates. The polypeptide is Ubiquitin-related modifier 1 homolog (Drosophila persimilis (Fruit fly)).